A 443-amino-acid polypeptide reads, in one-letter code: Serine/threonine-protein kinase ISR1 (443 aa).

Residues leucine 135–lysine 415 form the Protein kinase domain. Residues valine 141–valine 149 and lysine 169 contribute to the ATP site. Catalysis depends on aspartate 280, which acts as the Proton acceptor.

It belongs to the protein kinase superfamily. Ser/Thr protein kinase family.

It carries out the reaction L-seryl-[protein] + ATP = O-phospho-L-seryl-[protein] + ADP + H(+). It catalyses the reaction L-threonyl-[protein] + ATP = O-phospho-L-threonyl-[protein] + ADP + H(+). Functionally, probable serine/threonine protein kinase which may function redundantly with MPK1-independent branch of the PCK1 pathway that is presumed to be required for the tolerance to high temperatures and staurosporine. The protein is Serine/threonine-protein kinase ISR1 (ISR1) of Saccharomyces cerevisiae (strain ATCC 204508 / S288c) (Baker's yeast).